A 219-amino-acid chain; its full sequence is Probable nicotinate-nucleotide adenylyltransferase (219 aa).

The protein belongs to the NadD family.

The catalysed reaction is nicotinate beta-D-ribonucleotide + ATP + H(+) = deamido-NAD(+) + diphosphate. Its pathway is cofactor biosynthesis; NAD(+) biosynthesis; deamido-NAD(+) from nicotinate D-ribonucleotide: step 1/1. Catalyzes the reversible adenylation of nicotinate mononucleotide (NaMN) to nicotinic acid adenine dinucleotide (NaAD). This is Probable nicotinate-nucleotide adenylyltransferase from Herminiimonas arsenicoxydans.